The sequence spans 178 residues: Large ribosomal subunit protein uL6 (178 aa).

The protein belongs to the universal ribosomal protein uL6 family. Part of the 50S ribosomal subunit.

In terms of biological role, this protein binds to the 23S rRNA, and is important in its secondary structure. It is located near the subunit interface in the base of the L7/L12 stalk, and near the tRNA binding site of the peptidyltransferase center. This is Large ribosomal subunit protein uL6 from Opitutus terrae (strain DSM 11246 / JCM 15787 / PB90-1).